A 483-amino-acid polypeptide reads, in one-letter code: MGQFISFMQEIPIFLQEALNIALVAVSLICIVKGLVNLYRCGLFQLMVFLVLAGRSCSEETFKIGMHTQFQEVSLSLSALLTNQSHELPMLCLANKTHLYLKSGRSSFKINIDSVTVLTRSADVFVHSPKLGSCFESDEEWVVAWWIEAIGHRWDQDPGLLCRNKTKTEGKLIQINISRADGNVHYGWRLKNGLDHIYRGREEPCFEGEQCLIKIQPEDWPTDCKADHTNTFRFLSRSQKSIAVGRTLKAFFSWSLTDPLGNVPPGGYCLEKWMLVASELKCFGNTAIAKCNQNHDSEFCDMLRLFDYNKNAIKTLNEETKTRVNVLSHTINALISDNLLMKNKIRELMSVPYCNYTRFWYVNHTLSGQHSLPRCWMIRNNSYLNSSEFRNEWILESDFLISEMLSKEYSERQGRTPITLVDICFWSTVFFTSTLFLHLIGFPTHEHIRGEGCPLPHRLNSMGGCRCGKYLPLKKPTIWHRRH.

The N-myristoyl glycine; by host moiety is linked to residue Gly-2. Over 2 to 17 (GQFISFMQEIPIFLQE) the chain is Extracellular. A helical transmembrane segment spans residues 18–32 (ALNIALVAVSLICIV). Residue Lys-33 is a topological domain, cytoplasmic. Residues 34–53 (GLVNLYRCGLFQLMVFLVLA) form a helical membrane-spanning segment. Extracellular loops occupy residues 54–58 (GRSCS) and 59–422 (EETF…TLVD). Cys-57 is a binding site for Zn(2+). Asn-83 and Asn-95 each carry an N-linked (GlcNAc...) asparagine; by host glycan. Disulfide bonds link Cys-92–Cys-224, Cys-134–Cys-162, Cys-205–Cys-211, Cys-269–Cys-282, Cys-291–Cys-300, and Cys-354–Cys-375. N-linked (GlcNAc...) asparagine; by host glycosylation is found at Asn-164 and Asn-176. 4 N-linked (GlcNAc...) asparagine; by host glycosylation sites follow: Asn-355, Asn-363, Asn-380, and Asn-385. A helical membrane pass occupies residues 423-443 (ICFWSTVFFTSTLFLHLIGFP). Residues 444–483 (THEHIRGEGCPLPHRLNSMGGCRCGKYLPLKKPTIWHRRH) are Cytoplasmic-facing. Zn(2+) is bound by residues His-445, His-447, Cys-453, His-457, Cys-465, Cys-467, and His-483.

The protein belongs to the arenaviridae GPC protein family. In terms of assembly, homotetramer; disulfide-linked. Homotetramer. GP2 homotetramers bind through ionic interactions with GP1 homotetramers to form the GP complex together with the stable signal peptide. The GP-C polyprotein interacts with the host protease MBTPS1/SKI-1 resulting in the polyprotein processing. In terms of processing, specific enzymatic cleavages in vivo yield mature proteins. GP-C polyprotein is cleaved in the endoplasmic reticulum by the host protease MBTPS1. Only cleaved glycoprotein is incorporated into virions. The SSP remains stably associated with the GP complex following cleavage by signal peptidase and plays crucial roles in the trafficking of GP through the secretory pathway. Post-translationally, myristoylation is necessary for GP2-mediated fusion activity.

The protein resides in the virion membrane. Its subcellular location is the host endoplasmic reticulum membrane. It localises to the host Golgi apparatus membrane. The protein localises to the host cell membrane. Functionally, class I viral fusion protein that directs fusion of viral and host endosomal membranes, leading to delivery of the nucleocapsid into the cytoplasm. Membrane fusion is mediated by irreversible conformational changes induced upon acidification in the endosome. In terms of biological role, stable signal peptide (SSP): cleaved and functions as a signal peptide. In addition, it is also retained as the third component of the GP complex. The SSP is required for efficient glycoprotein expression, post-translational maturation cleavage of GP1 and GP2, glycoprotein transport to the cell surface plasma membrane, formation of infectious virus particles, and acid pH-dependent glycoprotein-mediated cell fusion. Its function is as follows. Interacts with the host receptor. The chain is Pre-glycoprotein polyprotein GP complex from Tacaribe virus (strain V5) (TCRV).